The primary structure comprises 119 residues: NADH-quinone oxidoreductase subunit A (119 aa).

3 helical membrane-spanning segments follow: residues 9-29 (IFLF…LGYI), 63-83 (LVAI…PWAV), and 88-108 (IGAL…VGFI).

Belongs to the complex I subunit 3 family. As to quaternary structure, NDH-1 is composed of 14 different subunits. Subunits NuoA, H, J, K, L, M, N constitute the membrane sector of the complex.

The protein resides in the cell inner membrane. It carries out the reaction a quinone + NADH + 5 H(+)(in) = a quinol + NAD(+) + 4 H(+)(out). NDH-1 shuttles electrons from NADH, via FMN and iron-sulfur (Fe-S) centers, to quinones in the respiratory chain. The immediate electron acceptor for the enzyme in this species is believed to be ubiquinone. Couples the redox reaction to proton translocation (for every two electrons transferred, four hydrogen ions are translocated across the cytoplasmic membrane), and thus conserves the redox energy in a proton gradient. In Albidiferax ferrireducens (strain ATCC BAA-621 / DSM 15236 / T118) (Rhodoferax ferrireducens), this protein is NADH-quinone oxidoreductase subunit A.